A 213-amino-acid chain; its full sequence is Isomeliandiol synthase MOI2 (213 aa).

Transmembrane regions (helical) follow at residues 18-38, 52-72, 109-129, 137-157, and 171-191; these read AALHAWNGLSLFLIVFISWFI, VLCWWALTGLIHVFQEGYYVF, IESMASVVLGPLSLLAAYALA, ILQFGVSIAQLYGACLYFLSA, and YWAYYVGQSSIWVIVPALIAI. The EXPERA domain occupies 48-190; that stretch reads MDRVVLCWWA…IWVIVPALIA (143 aa).

It belongs to the EBP family. In terms of tissue distribution, mainly expressed in petioles.

Its subcellular location is the membrane. It catalyses the reaction 7,8-epoxymelianol = isomeliandiol. Its pathway is secondary metabolite biosynthesis; terpenoid biosynthesis. In terms of biological role, isomerase involved in the biosynthesis of limonoids triterpene natural products such as azadirachtin, an antifeedant widely used as bioinsecticide, and possessing many medicinal applications including anti-tumoral, anti-malarial, anti-rheumatic, antibacterial, anti-inflammatory, anti-pyretic and diuretic effects. Catalyzes the conversion of 7,8-epoxymelianol to isomeliandiol via skeletal rearrangements. This Melia azedarach (Chinaberry tree) protein is Isomeliandiol synthase MOI2.